Consider the following 638-residue polypeptide: Threonine--tRNA ligase (638 aa).

Residues 1–61 (MPNITLPDGS…EADTPLAIVT (61 aa)) enclose the TGS domain. Residues 242 to 533 (DHRKLGRLLD…LIEHYAGALP (292 aa)) are catalytic. Cysteine 333, histidine 384, and histidine 510 together coordinate Zn(2+).

The protein belongs to the class-II aminoacyl-tRNA synthetase family. As to quaternary structure, homodimer. The cofactor is Zn(2+).

Its subcellular location is the cytoplasm. It carries out the reaction tRNA(Thr) + L-threonine + ATP = L-threonyl-tRNA(Thr) + AMP + diphosphate + H(+). Catalyzes the attachment of threonine to tRNA(Thr) in a two-step reaction: L-threonine is first activated by ATP to form Thr-AMP and then transferred to the acceptor end of tRNA(Thr). Also edits incorrectly charged L-seryl-tRNA(Thr). This is Threonine--tRNA ligase from Aromatoleum aromaticum (strain DSM 19018 / LMG 30748 / EbN1) (Azoarcus sp. (strain EbN1)).